The primary structure comprises 62 residues: Photosystem II reaction center protein Z (62 aa).

2 consecutive transmembrane segments (helical) span residues 8–28 (AVFALIATSSVLVISVPLVFA) and 41–61 (FSGTSLWIGLVFLVAILNSLI).

Belongs to the PsbZ family. PSII is composed of 1 copy each of membrane proteins PsbA, PsbB, PsbC, PsbD, PsbE, PsbF, PsbH, PsbI, PsbJ, PsbK, PsbL, PsbM, PsbT, PsbY, PsbZ, Psb30/Ycf12, at least 3 peripheral proteins of the oxygen-evolving complex and a large number of cofactors. It forms dimeric complexes.

It is found in the plastid. Its subcellular location is the chloroplast thylakoid membrane. In terms of biological role, may control the interaction of photosystem II (PSII) cores with the light-harvesting antenna, regulates electron flow through the 2 photosystem reaction centers. PSII is a light-driven water plastoquinone oxidoreductase, using light energy to abstract electrons from H(2)O, generating a proton gradient subsequently used for ATP formation. The protein is Photosystem II reaction center protein Z of Hordeum vulgare (Barley).